The following is a 401-amino-acid chain: Phosphoglycerate kinase (401 aa).

Substrate-binding positions include 21–23, Arg37, 60–63, Arg119, and Arg152; these read DLN and HLGR. ATP is bound by residues Lys203, Glu325, and 351–354; that span reads GGDT.

Belongs to the phosphoglycerate kinase family. Monomer.

Its subcellular location is the cytoplasm. It carries out the reaction (2R)-3-phosphoglycerate + ATP = (2R)-3-phospho-glyceroyl phosphate + ADP. Its pathway is carbohydrate degradation; glycolysis; pyruvate from D-glyceraldehyde 3-phosphate: step 2/5. The polypeptide is Phosphoglycerate kinase (Acidithiobacillus ferrooxidans (strain ATCC 23270 / DSM 14882 / CIP 104768 / NCIMB 8455) (Ferrobacillus ferrooxidans (strain ATCC 23270))).